The following is a 439-amino-acid chain: Microfibrillar-associated protein 1 (439 aa).

2 disordered regions span residues 1–27 (MSVPSALMKQPPIQSTAGAVPVRNEKG) and 39–200 (YVSG…PRLK). Ser-2 carries the N-acetylserine modification. 2 positions are modified to phosphoserine: Ser-52 and Ser-53. Basic and acidic residues predominate over residues 61–70 (QFIKKAKEQE). Residue Lys-67 forms a Glycyl lysine isopeptide (Lys-Gly) (interchain with G-Cter in SUMO2) linkage. A compositionally biased stretch (acidic residues) spans 71-81 (AEPEEQEEDSS). Residues Ser-94, Ser-116, Ser-118, Ser-132, and Ser-133 each carry the phosphoserine modification. Composition is skewed to acidic residues over residues 112-122 (VVGESDSEVEG) and 131-144 (DSSEEEEEEIDDEE). The segment covering 145 to 163 (IERRRGMMRQRAQERKNEE) has biased composition (basic and acidic residues). The segment covering 178 to 195 (ESESESEYEEYTDSEDEM) has biased composition (acidic residues). Lys-249 participates in a covalent cross-link: Glycyl lysine isopeptide (Lys-Gly) (interchain with G-Cter in SUMO2). Thr-267 bears the Phosphothreonine mark. Residue Lys-357 forms a Glycyl lysine isopeptide (Lys-Gly) (interchain with G-Cter in SUMO2) linkage. Residue Ser-361 is modified to Phosphoserine. Residues Lys-371, Lys-381, Lys-415, and Lys-418 each participate in a glycyl lysine isopeptide (Lys-Gly) (interchain with G-Cter in SUMO2) cross-link. Ser-432 carries the post-translational modification Phosphoserine.

The protein belongs to the MFAP1 family. In terms of assembly, component of the spliceosome B complex. Interacts with PRPF38A (via N-terminal interaction domain).

The protein localises to the nucleus. Its function is as follows. Involved in pre-mRNA splicing as a component of the spliceosome. The sequence is that of Microfibrillar-associated protein 1 from Homo sapiens (Human).